Reading from the N-terminus, the 207-residue chain is MAFTEIKHPLIIDKLTRMRKTETSSKDFRENLSEIAQLMVYEIFRDLKLESVDIETPVSKTTGYTINQPVVLVPILRAGIGMLDGIQKLIPTARIAHIGLYRDEETLETHQYFAKTTKDIDKSYVIVVDPMLATGGSACKAIDIVKQWGAKEIKFVCLVAVEPGIKRLQEQHPDVEIYAASKDEKLNEKGYIVPGLGDAGDRIFGTK.

5-phospho-alpha-D-ribose 1-diphosphate-binding positions include arginine 77, arginine 102, and 129 to 137 (DPMLATGGS). Uracil is bound by residues isoleucine 192 and 197 to 199 (GDA). Aspartate 198 serves as a coordination point for 5-phospho-alpha-D-ribose 1-diphosphate.

Belongs to the UPRTase family. Requires Mg(2+) as cofactor.

It carries out the reaction UMP + diphosphate = 5-phospho-alpha-D-ribose 1-diphosphate + uracil. Its pathway is pyrimidine metabolism; UMP biosynthesis via salvage pathway; UMP from uracil: step 1/1. Allosterically activated by GTP. In terms of biological role, catalyzes the conversion of uracil and 5-phospho-alpha-D-ribose 1-diphosphate (PRPP) to UMP and diphosphate. This chain is Uracil phosphoribosyltransferase, found in Mycoplasma capricolum subsp. capricolum (strain California kid / ATCC 27343 / NCTC 10154).